Reading from the N-terminus, the 84-residue chain is Toxin CsE9 (84 aa).

An N-terminal signal peptide occupies residues 1-19 (MNSLLMITTCLILIGTVLA). Residues 20 to 83 (EDGYLFDKRK…ISRTPGKTCK (64 aa)) form the LCN-type CS-alpha/beta domain. 4 cysteine pairs are disulfide-bonded: Cys31–Cys82, Cys35–Cys58, Cys44–Cys63, and Cys48–Cys65.

Belongs to the long (4 C-C) scorpion toxin superfamily. Sodium channel inhibitor family. Beta subfamily. In terms of tissue distribution, expressed by the venom gland.

It localises to the secreted. Beta toxins bind voltage-independently at site-4 of sodium channels (Nav) and shift the voltage of activation toward more negative potentials thereby affecting sodium channel activation and promoting spontaneous and repetitive firing. This chain is Toxin CsE9, found in Centruroides sculpturatus (Arizona bark scorpion).